The chain runs to 98 residues: Protein PROLINE CONTENT ALTERNATIVE 22 (98 aa).

As to expression, mainly expressed in flowers, to a lower extent, in roots and, at very low levels, in leaves and stems.

It localises to the cytoplasm. Its function is as follows. Acts as an opponent to RZF1 during early seedling growth in term of proline accumulation in response to dehydration and abscisic acid (ABA). Confers sensitivity to abiotic stresses such as ABA, drought and osmotic stress (e.g. mannitol treatment) by preventing proline accumulation and by reducing the expression of dehydration-inducible genes. Promotes the production of lipid peroxidation by drought stress thus leading to malondialdehyde (MDA) synthesis. Prevents pollen tube elongation. Necessary for RZF1 expression in seedlings. The sequence is that of Protein PROLINE CONTENT ALTERNATIVE 22 from Arabidopsis thaliana (Mouse-ear cress).